The primary structure comprises 541 residues: Tyrosine-protein kinase Yes (541 aa).

Residues 1 to 20 (MGCIKSKEDKGPAMKYRTDN) are compositionally biased toward basic and acidic residues. Residues 1–43 (MGCIKSKEDKGPAMKYRTDNTPEPISSHVSHYGSDSSQATQSP) are disordered. Glycine 2 is lipidated: N-myristoyl glycine. The S-palmitoyl cysteine; in membrane form moiety is linked to residue cysteine 3. A compositionally biased stretch (low complexity) spans 26–37 (SSHVSHYGSDSS). The 62-residue stretch at 89-150 (GGVTVFVALY…PSNYVAPADS (62 aa)) folds into the SH3 domain. Residues 156–253 (WYFGKMGRKD…GLCHKLTTVC (98 aa)) form the SH2 domain. The region spanning 275–528 (LRLEVKLGQG…YIQSFLEDYF (254 aa)) is the Protein kinase domain. ATP-binding positions include 281 to 289 (LGQGCFGEV) and lysine 303. Catalysis depends on aspartate 394, which acts as the Proton acceptor. Phosphotyrosine; by autocatalysis is present on tyrosine 424. At tyrosine 535 the chain carries Phosphotyrosine; by CSK.

It belongs to the protein kinase superfamily. Tyr protein kinase family. SRC subfamily. In terms of processing, autophosphorylation at Tyr-424 maintains enzyme activity. Post-translationally, palmitoylation at Cys-3 promotes membrane localization.

It is found in the cell membrane. It localises to the cytoplasm. The protein localises to the cytoskeleton. The protein resides in the microtubule organizing center. Its subcellular location is the centrosome. It is found in the cytosol. It localises to the cell junction. The catalysed reaction is L-tyrosyl-[protein] + ATP = O-phospho-L-tyrosyl-[protein] + ADP + H(+). Non-receptor protein tyrosine kinase that is involved in the regulation of cell growth and survival, apoptosis, cell-cell adhesion, cytoskeleton remodeling, differentiation, G2/M progression and cytokinesis. The polypeptide is Tyrosine-protein kinase Yes (YES1) (Gallus gallus (Chicken)).